The chain runs to 267 residues: Elsinochrome reductase 1 (267 aa).

NADP(+) contacts are provided by Ile26, Asp72, Asn99, and Arg132. Ser149 (proton donor) is an active-site residue. NADP(+)-binding residues include Tyr163, Lys167, Ile196, and Thr198. Tyr163 functions as the Proton acceptor in the catalytic mechanism. Residue Lys167 is the Lowers pKa of active site Tyr of the active site.

It belongs to the short-chain dehydrogenases/reductases (SDR) family.

Reductase; part of the gene cluster that mediates the biosynthesis of elsinochromes, pigments consisting of at least four interconvertible tautomers (A, B, C and D) that have a core phenolic quinone to which various side chains are attached and which play an important role in fungal pathogenesis. The non-reducing polyketide synthase PKS1 was proposed to iteratively catalyze decarboxylation between acetyl-CoA and malonyl-CoA subunits for polyketide chain elongation. The released polyketide undergoes cyclization to form an aromatic ring, and proceeds via serial modification steps to produce the heptaketide back- bone of elsinochrome. As elsinochrome has a symmetrical structure, two identical heptaketides are fused to form a core 1,2-dihydrobenzo-perylene ring structure, which can then be successively modified to produce the various derivatives of elsinochrome. Some of these reactions may be cooperatively carried out, at least in part, by the products of RDT1, OXR1 and PKS1. PRF1, embedded within the elsinochrome cluster possibly functions to stabilize some of the biosynthetic enzymes required for elsinochrome production. As prefoldin is a hexamer containing 2 a and 4 b subunits, additional prefoldin subunits, whose coding genes may not immediately link to the elsinochrome biosynthetic gene cluster, are required to fulfill the chaperone function. In addition, no methyltransferase-coding gene exists within the biosynthetic gene cluster, even though elsinochrome has four methyl groups at positions C3, C7, C8 and C12. Apparently, the identified gene cluster does not contain the entire entourage of genes responsible for elsinochrome biosynthesis. Once elsinochrome is synthesized, it must be exported outside the fungal cells, which is probably accomplished by the ECT1 transporter, to avoid toxicity. This Elsinoe fawcettii (Citrus scab fungus) protein is Elsinochrome reductase 1.